The chain runs to 150 residues: MKDEVALLATVTLLGVLLQAYFSLQVIRARRAHRVSPPLTTGPPEFERVYRAQVNCSEYFPLFLATLWVAGVYFHEGAAALCGLVYLFTRLRYFWGYARSAQLRLAPLYASARALWLLLALATLGLLAHFLPAAARAALLRLLRALLRTA.

The Cytoplasmic segment spans residues Met-1–Ala-6. The chain crosses the membrane as a helical span at residues Leu-7–Ile-27. The Lumenal segment spans residues Arg-28 to Arg-48. Residue Arg-30 coordinates glutathione. Arg-31 (proton donor) is an active-site residue. Ser-36 is subject to Phosphoserine. Residues Val-49–Val-69 form a helical membrane-spanning segment. Residues Arg-51–Asn-55 and Glu-58–Tyr-59 contribute to the glutathione site. Topologically, residues Ala-70–Tyr-73 are cytoplasmic. A helical membrane pass occupies residues Phe-74 to Phe-94. Residue Tyr-93 to Tyr-97 participates in glutathione binding. Over Trp-95–Arg-104 the chain is Lumenal. Arg-104 acts as the Proton acceptor in catalysis. The chain crosses the membrane as a helical span at residues Leu-105–Leu-124. The Cytoplasmic segment spans residues Gly-125–Ala-150.

It belongs to the MAPEG family. Homotrimer. Interacts with ALOX5AP and ALOX5. In terms of processing, phosphorylation at Ser-36 by RPS6KB1 inhibits the leukotriene-C4 synthase activity.

The protein localises to the nucleus outer membrane. It localises to the endoplasmic reticulum membrane. It is found in the nucleus membrane. The enzyme catalyses leukotriene C4 = leukotriene A4 + glutathione. It catalyses the reaction (13S,14S)-epoxy-(4Z,7Z,9E,11E,16Z,19Z)-docosahexaenoate + glutathione = (13R)-S-glutathionyl-(14S)-hydroxy-(4Z,7Z,9E,11E,16Z,19Z)-docosahexaenoate. Its pathway is lipid metabolism; leukotriene C4 biosynthesis. With respect to regulation, inhibited by MK886. Functionally, catalyzes the conjugation of leukotriene A4 with reduced glutathione (GSH) to form leukotriene C4 with high specificity. Can also catalyze the transfer of a glutathionyl group from glutathione (GSH) to 13(S),14(S)-epoxy-docosahexaenoic acid to form maresin conjugate in tissue regeneration 1 (MCTR1), a bioactive lipid mediator that possess potent anti-inflammatory and proresolving actions. The chain is Leukotriene C4 synthase (LTC4S) from Cavia porcellus (Guinea pig).